A 173-amino-acid chain; its full sequence is S-ribosylhomocysteine lyase (173 aa).

His54, His58, and Cys128 together coordinate Fe cation.

It belongs to the LuxS family. Homodimer. Fe cation serves as cofactor.

The enzyme catalyses S-(5-deoxy-D-ribos-5-yl)-L-homocysteine = (S)-4,5-dihydroxypentane-2,3-dione + L-homocysteine. In terms of biological role, involved in the synthesis of autoinducer 2 (AI-2) which is secreted by bacteria and is used to communicate both the cell density and the metabolic potential of the environment. The regulation of gene expression in response to changes in cell density is called quorum sensing. Catalyzes the transformation of S-ribosylhomocysteine (RHC) to homocysteine (HC) and 4,5-dihydroxy-2,3-pentadione (DPD). The sequence is that of S-ribosylhomocysteine lyase from Hydrogenovibrio crunogenus (strain DSM 25203 / XCL-2) (Thiomicrospira crunogena).